A 278-amino-acid polypeptide reads, in one-letter code: tRNA pseudouridine synthase A (278 aa).

D61 (nucleophile) is an active-site residue. Y119 lines the substrate pocket.

The protein belongs to the tRNA pseudouridine synthase TruA family. In terms of assembly, homodimer.

The enzyme catalyses uridine(38/39/40) in tRNA = pseudouridine(38/39/40) in tRNA. Formation of pseudouridine at positions 38, 39 and 40 in the anticodon stem and loop of transfer RNAs. This chain is tRNA pseudouridine synthase A, found in Oleidesulfovibrio alaskensis (strain ATCC BAA-1058 / DSM 17464 / G20) (Desulfovibrio alaskensis).